The sequence spans 1088 residues: DNA polymerase delta catalytic subunit (1088 aa).

This sequence belongs to the DNA polymerase type-B family. Heterodimer with subunits of 125 kDa and 50 kDa. The 125 kDa subunit contains the polymerase active site and most likely the active site for the 3'-5' exonuclease activity.

The protein localises to the nucleus. The enzyme catalyses DNA(n) + a 2'-deoxyribonucleoside 5'-triphosphate = DNA(n+1) + diphosphate. In terms of biological role, this polymerase possesses two enzymatic activities: DNA synthesis (polymerase) and an exonucleolytic activity that degrades single-stranded DNA in the 3'- to 5'-direction. This Glycine max (Soybean) protein is DNA polymerase delta catalytic subunit (POLD1).